Here is a 261-residue protein sequence, read N- to C-terminus: Vacuolar protein sorting-associated protein 37D (261 aa).

A VPS37 C-terminal domain is found at 93-182; the sequence is AENCADKLQR…RRRERSAQPA (90 aa). The interval 172–261 is disordered; it reads LRRRERSAQP…RPSQPEPPHR (90 aa). The span at 181–195 shows a compositional bias: low complexity; it reads PAPTTAAAAAAAATA. 2 stretches are compositionally biased toward pro residues: residues 215–224 and 231–261; these read GPPPAVPRSL and PVPP…PPHR.

It belongs to the VPS37 family. In terms of assembly, component of the ESCRT-I complex (endosomal sorting complex required for transport I) which consists of TSG101, VPS28, a VPS37 protein (VPS37A to -D) and MVB12A or MVB12B in a 1:1:1:1 stoichiometry. Interacts with TSG101 and MVB12A. Component of the ESCRT-I complex (endosomal sorting complex required for transport I) which consists of TSG101, VPS28, a VPS37 protein (VPS37A to -D) and UBAP1 in a 1:1:1:1 stoichiometry.

Its subcellular location is the late endosome membrane. Functionally, component of the ESCRT-I complex, a regulator of vesicular trafficking process. Required for the sorting of endocytic ubiquitinated cargos into multivesicular bodies. May be involved in cell growth and differentiation. This is Vacuolar protein sorting-associated protein 37D from Mus musculus (Mouse).